Reading from the N-terminus, the 500-residue chain is Probable glycine dehydrogenase (decarboxylating) subunit 2 (500 aa).

At Lys-273 the chain carries N6-(pyridoxal phosphate)lysine.

Belongs to the GcvP family. C-terminal subunit subfamily. In terms of assembly, the glycine cleavage system is composed of four proteins: P, T, L and H. In this organism, the P 'protein' is a heterodimer of two subunits. It depends on pyridoxal 5'-phosphate as a cofactor.

The enzyme catalyses N(6)-[(R)-lipoyl]-L-lysyl-[glycine-cleavage complex H protein] + glycine + H(+) = N(6)-[(R)-S(8)-aminomethyldihydrolipoyl]-L-lysyl-[glycine-cleavage complex H protein] + CO2. Its function is as follows. The glycine cleavage system catalyzes the degradation of glycine. The P protein binds the alpha-amino group of glycine through its pyridoxal phosphate cofactor; CO(2) is released and the remaining methylamine moiety is then transferred to the lipoamide cofactor of the H protein. The chain is Probable glycine dehydrogenase (decarboxylating) subunit 2 from Rhodopirellula baltica (strain DSM 10527 / NCIMB 13988 / SH1).